The sequence spans 382 residues: Hyaluronidase (382 aa).

The or 24 signal peptide spans 1–28 (MSRPLVITEGMMIGVLLMLAPINALLLG). A propeptide spanning residues 29–33 (FVQST) is cleaved from the precursor. 2 disulfides stabilise this stretch: C54–C345 and C221–C233. The N-linked (GlcNAc...) asparagine glycan is linked to N115. E145 acts as the Proton donor in catalysis. N-linked (GlcNAc...) (complex) asparagine glycosylation occurs at N263.

The protein belongs to the glycosyl hydrolase 56 family. Homotetramer. N-glycosylated. Glycans found include a majority of small oligosaccharides (Man1-3GlcNAc2), most of which are either alpha 1,3-monofucosylated or alpha 1,3-(alpha 1,6-)difucosylated at the innermost GlcNAc residue, approximately 5% of high-mannose type structures, and 8% contains the terminal trisaccharide GalNAc beta 1-4[Fuc alpha 1-3]GlcNAc beta 1-in beta 1,2-linkage to the core alpha 1,3-mannosyl residue. As to expression, expressed in the venom glands of worker bees. It is also detected in the testes of drones but not in the queen-bee venom glands or in pupae.

The protein localises to the secreted. It carries out the reaction Random hydrolysis of (1-&gt;4)-linkages between N-acetyl-beta-D-glucosamine and D-glucuronate residues in hyaluronate.. In terms of biological role, hydrolyzes high molecular weight hyaluronic acid to produce small oligosaccharides. This Apis mellifera (Honeybee) protein is Hyaluronidase.